The sequence spans 410 residues: Peptidase T (410 aa).

Residue histidine 79 participates in Zn(2+) binding. Aspartate 81 is an active-site residue. Aspartate 142 contributes to the Zn(2+) binding site. Residue glutamate 176 is the Proton acceptor of the active site. 3 residues coordinate Zn(2+): glutamate 177, aspartate 199, and histidine 381.

This sequence belongs to the peptidase M20B family. Requires Zn(2+) as cofactor.

Its subcellular location is the cytoplasm. The catalysed reaction is Release of the N-terminal residue from a tripeptide.. Cleaves the N-terminal amino acid of tripeptides. In Listeria welshimeri serovar 6b (strain ATCC 35897 / DSM 20650 / CCUG 15529 / CIP 8149 / NCTC 11857 / SLCC 5334 / V8), this protein is Peptidase T.